We begin with the raw amino-acid sequence, 716 residues long: Protein C-mannosyl-transferase DPY19L3 (716 aa).

At 1–43 the chain is on the cytoplasmic side; that stretch reads MMSIRQRREIRATEVSEDFPAQEENVKLENKLPSGCTSRRLWK. A helical membrane pass occupies residues 44–64; it reads ILSLTIGGTIALCIGLLTSVY. The Lumenal portion of the chain corresponds to 65 to 154; the sequence is LATLHENDLW…RVLPIQKYLE (90 aa). A glycan (N-linked (GlcNAc...) asparagine) is linked at Asn-118. The helical transmembrane segment at 155 to 182 threads the bilayer; it reads PVYFYIYTLFGLQAIYVTALYITSWLLS. The Cytoplasmic portion of the chain corresponds to 183-184; sequence GT. The segment at residues 185–197 is an intramembrane region (name=3); the sequence is WLSGLLAAFWYVT. Residues 198-215 are Cytoplasmic-facing; it reads NRIDTTRVEFTIPLRENW. The segment at residues 216–230 is an intramembrane region (name=4); the sequence is ALPFFAIQIAAITYF. The Cytoplasmic portion of the chain corresponds to 231-239; sequence LRPNLQPLS. A helical transmembrane segment spans residues 240–256; it reads ERLTLLAIFISTFLFSL. Over 257-262 the chain is Lumenal; sequence TWQFNQ. Residues 263 to 279 traverse the membrane as a helical segment; that stretch reads FMMLMQALVLFTLDSLD. Residues 280-289 are Cytoplasmic-facing; that stretch reads MLPAVKATWL. Residues 290–306 form a helical membrane-spanning segment; that stretch reads YGIQITSLLLVCILQFF. The Lumenal portion of the chain corresponds to 307–308; it reads NS. Residues 309–323 traverse the membrane as a helical segment; that stretch reads MILGSLLISFNLSVF. Residues 324–338 are Cytoplasmic-facing; sequence IARKLQKNLKTGSFL. The chain crosses the membrane as a helical span at residues 339–359; it reads NRLGKLLLHLFMVLCLTLFLN. Over 360–414 the chain is Lumenal; that stretch reads NIIKKILNLKSDEHIFKFLKAKFGLGATRDFDANLYLCEEAFGLLPFNTFGRLSD. Residues 415–437 form a helical membrane-spanning segment; it reads TLLFYAYIFVLSITVIVAFVVAF. Residues 438–465 lie on the Cytoplasmic side of the membrane; it reads HNLSDSTNQQSVGKMEKGTVDLKPETAY. The chain crosses the membrane as a helical span at residues 466 to 485; the sequence is NLIHTILFGFLALSTMRMKY. Residues 486–487 are Lumenal-facing; it reads LW. The helical transmembrane segment at 488–499 threads the bilayer; it reads TSHMCVFASFGL. Over 500 to 522 the chain is Cytoplasmic; it reads CSPEIWELLLKSVHLYNPKRICI. Residues 523–539 form a helical membrane-spanning segment; that stretch reads MRYSVPILILLYLCYKF. The Lumenal portion of the chain corresponds to 540–716; the sequence is WPGMMDELSE…FHVYKLSRNK (177 aa). A glycan (N-linked (GlcNAc...) asparagine) is linked at Asn-704.

The protein belongs to the dpy-19 family. In terms of tissue distribution, widely expressed.

The protein localises to the endoplasmic reticulum membrane. The catalysed reaction is L-tryptophyl-[protein] + a di-trans,poly-cis-dolichyl beta-D-mannosyl phosphate = C-alpha-D-mannosyl-L-tryptophyl-[protein] + a di-trans,poly-cis-dolichyl phosphate + H(+). The protein operates within protein modification; protein glycosylation. C-mannosyltransferase that mediates C-mannosylation of tryptophan residues on target proteins. The reaction occurs on the luminal side of the endoplasmic reticulum and involves the transfer of a mannose unit from a dolichylphosphate mannose (Dol-P-Man) donor to an acceptor protein containing a WxxW or WxxC consensus sequence. C-mannosylates RSPO1, a Wnt signaling regulator, preferentially at the first Trp residue in the sequence WxxW. C-mannosylates the netrin receptor UNC5A, preferentially at the third tryptophan of WxxWxxWxxC sequence. In terms of biological role, has no C-mannosyltransferase activity. In Homo sapiens (Human), this protein is Protein C-mannosyl-transferase DPY19L3 (DPY19L3).